The following is a 156-amino-acid chain: Small ribosomal subunit protein uS7 (156 aa).

This sequence belongs to the universal ribosomal protein uS7 family. In terms of assembly, part of the 30S ribosomal subunit. Contacts proteins S9 and S11.

In terms of biological role, one of the primary rRNA binding proteins, it binds directly to 16S rRNA where it nucleates assembly of the head domain of the 30S subunit. Is located at the subunit interface close to the decoding center, probably blocks exit of the E-site tRNA. This Leifsonia xyli subsp. xyli (strain CTCB07) protein is Small ribosomal subunit protein uS7.